The sequence spans 541 residues: Membrane protein insertase YidC (541 aa).

The next 6 membrane-spanning stretches (helical) occupy residues 7–27, 289–309, 356–376, 430–450, 463–483, and 498–518; these read FLIVAIFLSVFLLWDKWGVTH, YLLTVVNPELVIAPGAIVTLP, IIHSWGYSIITLTLLIKLAFY, LPILVQIPVFISLYWVLLEMV, LSAQDPYYILPLIMGVSMFAQ, and IMMALPFVFTIFFLWFPSGLV.

The protein belongs to the OXA1/ALB3/YidC family. Type 1 subfamily. In terms of assembly, interacts with the Sec translocase complex via SecD. Specifically interacts with transmembrane segments of nascent integral membrane proteins during membrane integration.

It is found in the cell inner membrane. Its function is as follows. Required for the insertion and/or proper folding and/or complex formation of integral membrane proteins into the membrane. Involved in integration of membrane proteins that insert both dependently and independently of the Sec translocase complex, as well as at least some lipoproteins. Aids folding of multispanning membrane proteins. This is Membrane protein insertase YidC from Ruthia magnifica subsp. Calyptogena magnifica.